A 75-amino-acid chain; its full sequence is Sec-independent protein translocase protein TatA (75 aa).

The helical transmembrane segment at 1–21 (MGSFSIWHWLVVLAIVLLVFG) threads the bilayer. Positions 41–75 (KGMRDEDKPNAQLGDESRTQDASRTAQDEHDRNAR) are disordered.

The protein belongs to the TatA/E family. As to quaternary structure, the Tat system comprises two distinct complexes: a TatABC complex, containing multiple copies of TatA, TatB and TatC subunits, and a separate TatA complex, containing only TatA subunits. Substrates initially bind to the TatABC complex, which probably triggers association of the separate TatA complex to form the active translocon.

It is found in the cell inner membrane. Its function is as follows. Part of the twin-arginine translocation (Tat) system that transports large folded proteins containing a characteristic twin-arginine motif in their signal peptide across membranes. TatA could form the protein-conducting channel of the Tat system. The polypeptide is Sec-independent protein translocase protein TatA (Stenotrophomonas maltophilia (strain K279a)).